A 456-amino-acid polypeptide reads, in one-letter code: Methylenetetrahydrofolate--tRNA-(uracil-5-)-methyltransferase TrmFO (456 aa).

9-14 (GGGMAG) is a binding site for FAD.

This sequence belongs to the MnmG family. TrmFO subfamily. Requires FAD as cofactor.

The protein localises to the cytoplasm. It catalyses the reaction uridine(54) in tRNA + (6R)-5,10-methylene-5,6,7,8-tetrahydrofolate + NADH + H(+) = 5-methyluridine(54) in tRNA + (6S)-5,6,7,8-tetrahydrofolate + NAD(+). The catalysed reaction is uridine(54) in tRNA + (6R)-5,10-methylene-5,6,7,8-tetrahydrofolate + NADPH + H(+) = 5-methyluridine(54) in tRNA + (6S)-5,6,7,8-tetrahydrofolate + NADP(+). Functionally, catalyzes the folate-dependent formation of 5-methyl-uridine at position 54 (M-5-U54) in all tRNAs. This is Methylenetetrahydrofolate--tRNA-(uracil-5-)-methyltransferase TrmFO from Novosphingobium aromaticivorans (strain ATCC 700278 / DSM 12444 / CCUG 56034 / CIP 105152 / NBRC 16084 / F199).